Here is a 165-residue protein sequence, read N- to C-terminus: Peptide methionine sulfoxide reductase MsrA (165 aa).

The active site involves C10.

Belongs to the MsrA Met sulfoxide reductase family.

The enzyme catalyses L-methionyl-[protein] + [thioredoxin]-disulfide + H2O = L-methionyl-(S)-S-oxide-[protein] + [thioredoxin]-dithiol. It catalyses the reaction [thioredoxin]-disulfide + L-methionine + H2O = L-methionine (S)-S-oxide + [thioredoxin]-dithiol. Functionally, has an important function as a repair enzyme for proteins that have been inactivated by oxidation. Catalyzes the reversible oxidation-reduction of methionine sulfoxide in proteins to methionine. In Campylobacter jejuni subsp. jejuni serotype O:6 (strain 81116 / NCTC 11828), this protein is Peptide methionine sulfoxide reductase MsrA.